A 417-amino-acid chain; its full sequence is MLKKDMNIADYDPELFNAIQNETLRQEEHIELIASENYTSPRVMEAQGSQLTNKYAEGYPGKRYYGGCEYVDVVETLAIERAKELFGATYANVQPHSGSQANSAVYMALLKPGDTVLGMNLAHGGHLTHGSPVNFSGKLYNIIPYGIDESGKIDYDEMERLAVEHKPKMMIGGFSAYSGIVDWAKMREIADKIGAYLFVDMAHVAGLIAAGVYPNPVPHAHVVTSTTHKTLAGPRGGVILSAADDEDLYKKLNSAVFPGGQGGPLMHVIAGKAVAFKEALEPEFKVYQQQVVNNAKAMVEVFLERGYKIVSGGTSNHLMLVDLIGRDLTGKEADAALGSANITVNKNSVPNDPRSPFVTSGVRIGTPAITRRGFKEAESKELTGWICDILDDASNPAVIERVKGQVLALCARFPVYG.

Residues L121 and 125 to 127 (GHL) each bind (6S)-5,6,7,8-tetrahydrofolate. K229 carries the post-translational modification N6-(pyridoxal phosphate)lysine. 355–357 (SPF) contributes to the (6S)-5,6,7,8-tetrahydrofolate binding site.

The protein belongs to the SHMT family. Homodimer. Pyridoxal 5'-phosphate is required as a cofactor.

It is found in the cytoplasm. The enzyme catalyses (6R)-5,10-methylene-5,6,7,8-tetrahydrofolate + glycine + H2O = (6S)-5,6,7,8-tetrahydrofolate + L-serine. The protein operates within one-carbon metabolism; tetrahydrofolate interconversion. It functions in the pathway amino-acid biosynthesis; glycine biosynthesis; glycine from L-serine: step 1/1. Functionally, catalyzes the reversible interconversion of serine and glycine with tetrahydrofolate (THF) serving as the one-carbon carrier. This reaction serves as the major source of one-carbon groups required for the biosynthesis of purines, thymidylate, methionine, and other important biomolecules. Also exhibits THF-independent aldolase activity toward beta-hydroxyamino acids, producing glycine and aldehydes, via a retro-aldol mechanism. The protein is Serine hydroxymethyltransferase of Shewanella baltica (strain OS223).